Consider the following 213-residue polypeptide: MSSVSIVDYGVGNLLSVARAFQYFDASVNLVSTPEEIMSADRLVLPGVGAFEDGMKGLTTLNFIEPIKQFARSGKPFLGICLGMQMMLSRSTEFGQHEGLDLIAGEVVSVPSHGVDGQLHKIPHIGWNELVSTSEGEDWCHTILKNIPLNSSVYFVHSFMAMPSNPKKRLADTLYDGQAISAVIKDENMYGCQFHPEKSGEVGLSIIQQFLQI.

In terms of domain architecture, Glutamine amidotransferase type-1 spans 3–213; that stretch reads SVSIVDYGVG…LSIIQQFLQI (211 aa). The Nucleophile role is filled by cysteine 81. Catalysis depends on residues histidine 195 and glutamate 197.

As to quaternary structure, heterodimer of HisH and HisF.

It localises to the cytoplasm. It catalyses the reaction 5-[(5-phospho-1-deoxy-D-ribulos-1-ylimino)methylamino]-1-(5-phospho-beta-D-ribosyl)imidazole-4-carboxamide + L-glutamine = D-erythro-1-(imidazol-4-yl)glycerol 3-phosphate + 5-amino-1-(5-phospho-beta-D-ribosyl)imidazole-4-carboxamide + L-glutamate + H(+). The catalysed reaction is L-glutamine + H2O = L-glutamate + NH4(+). It functions in the pathway amino-acid biosynthesis; L-histidine biosynthesis; L-histidine from 5-phospho-alpha-D-ribose 1-diphosphate: step 5/9. IGPS catalyzes the conversion of PRFAR and glutamine to IGP, AICAR and glutamate. The HisH subunit provides the glutamine amidotransferase activity that produces the ammonia necessary to HisF for the synthesis of IGP and AICAR. The protein is Imidazole glycerol phosphate synthase subunit HisH 1 of Legionella pneumophila (strain Paris).